The following is a 150-amino-acid chain: D-aminoacyl-tRNA deacylase (150 aa).

A Gly-cisPro motif, important for rejection of L-amino acids motif is present at residues 136-137; sequence GP.

It belongs to the DTD family. As to quaternary structure, homodimer.

It is found in the cytoplasm. The catalysed reaction is glycyl-tRNA(Ala) + H2O = tRNA(Ala) + glycine + H(+). The enzyme catalyses a D-aminoacyl-tRNA + H2O = a tRNA + a D-alpha-amino acid + H(+). An aminoacyl-tRNA editing enzyme that deacylates mischarged D-aminoacyl-tRNAs. Also deacylates mischarged glycyl-tRNA(Ala), protecting cells against glycine mischarging by AlaRS. Acts via tRNA-based rather than protein-based catalysis; rejects L-amino acids rather than detecting D-amino acids in the active site. By recycling D-aminoacyl-tRNA to D-amino acids and free tRNA molecules, this enzyme counteracts the toxicity associated with the formation of D-aminoacyl-tRNA entities in vivo and helps enforce protein L-homochirality. The sequence is that of D-aminoacyl-tRNA deacylase from Staphylococcus saprophyticus subsp. saprophyticus (strain ATCC 15305 / DSM 20229 / NCIMB 8711 / NCTC 7292 / S-41).